The primary structure comprises 611 residues: ATP-dependent zinc metalloprotease FtsH (611 aa).

A topological domain (cytoplasmic) is located at residue methionine 1. Residues 2–22 (VKNLIFWLVITVVLMSIFQNF) form a helical membrane-spanning segment. At 23 to 98 (NTNDVNNHKV…IGAIPEEPSL (76 aa)) the chain is on the extracellular side. A helical membrane pass occupies residues 99 to 119 (FISILISWFPMLLLIGVWIFF). Residues 120-611 (MRQMQMGGGK…KGWIETDTNK (492 aa)) are Cytoplasmic-facing. Residue 192–199 (GPPGTGKT) participates in ATP binding. Histidine 414 is a binding site for Zn(2+). Residue glutamate 415 is part of the active site. Zn(2+)-binding residues include histidine 418 and aspartate 492.

The protein in the central section; belongs to the AAA ATPase family. It in the C-terminal section; belongs to the peptidase M41 family. In terms of assembly, homohexamer. The cofactor is Zn(2+).

It localises to the cell membrane. Acts as a processive, ATP-dependent zinc metallopeptidase for both cytoplasmic and membrane proteins. Plays a role in the quality control of integral membrane proteins. This Buchnera aphidicola subsp. Acyrthosiphon pisum (strain APS) (Acyrthosiphon pisum symbiotic bacterium) protein is ATP-dependent zinc metalloprotease FtsH.